Consider the following 215-residue polypeptide: Probable transaldolase (215 aa).

Catalysis depends on lysine 83, which acts as the Schiff-base intermediate with substrate.

The protein belongs to the transaldolase family. Type 3B subfamily.

The protein resides in the cytoplasm. It catalyses the reaction D-sedoheptulose 7-phosphate + D-glyceraldehyde 3-phosphate = D-erythrose 4-phosphate + beta-D-fructose 6-phosphate. The protein operates within carbohydrate degradation; pentose phosphate pathway; D-glyceraldehyde 3-phosphate and beta-D-fructose 6-phosphate from D-ribose 5-phosphate and D-xylulose 5-phosphate (non-oxidative stage): step 2/3. Its function is as follows. Transaldolase is important for the balance of metabolites in the pentose-phosphate pathway. The polypeptide is Probable transaldolase (Moorella thermoacetica (strain ATCC 39073 / JCM 9320)).